Reading from the N-terminus, the 154-residue chain is NADPH-dependent 7-cyano-7-deazaguanine reductase (154 aa).

Polar residues predominate over residues 1 to 23 (MPNTDVSSLSMLGQQTETAQSPE). Residues 1-26 (MPNTDVSSLSMLGQQTETAQSPEQAV) form a disordered region. The Thioimide intermediate role is filled by Cys-52. Asp-59 serves as the catalytic Proton donor. Residues 74–76 (VES) and 93–94 (HE) contribute to the substrate site.

Belongs to the GTP cyclohydrolase I family. QueF type 1 subfamily.

It localises to the cytoplasm. The catalysed reaction is 7-aminomethyl-7-carbaguanine + 2 NADP(+) = 7-cyano-7-deazaguanine + 2 NADPH + 3 H(+). The protein operates within tRNA modification; tRNA-queuosine biosynthesis. Catalyzes the NADPH-dependent reduction of 7-cyano-7-deazaguanine (preQ0) to 7-aminomethyl-7-deazaguanine (preQ1). This Rhizobium leguminosarum bv. trifolii (strain WSM2304) protein is NADPH-dependent 7-cyano-7-deazaguanine reductase.